Reading from the N-terminus, the 122-residue chain is MIQVQTVLNVADNTGAKKLMCIRILGSSFRRYASIGDIIVCSCKEAAPGGVVKKGDVVKAVVVRTKKEIGRPDGSYIKFDENAAVVIKDDKSPRGTRIFGPVARELREKDFMKIVSLAPEVL.

The protein belongs to the universal ribosomal protein uL14 family. As to quaternary structure, part of the 50S ribosomal subunit. Forms a cluster with proteins L3 and L19. In the 70S ribosome, L14 and L19 interact and together make contacts with the 16S rRNA in bridges B5 and B8.

In terms of biological role, binds to 23S rRNA. Forms part of two intersubunit bridges in the 70S ribosome. The chain is Large ribosomal subunit protein uL14 from Desulforudis audaxviator (strain MP104C).